The sequence spans 157 residues: Transcriptional repressor NrdR (157 aa).

Residues 1–21 (MKCPHCGNNGSRVVDSRPTDE) are disordered. The segment at 3-34 (CPHCGNNGSRVVDSRPTDEGRVIRRRRECEKC) is a zinc-finger region. The 91-residue stretch at 49 to 139 (LLVIKKNGSR…VYRQFKDMHV (91 aa)) folds into the ATP-cone domain.

This sequence belongs to the NrdR family. The cofactor is Zn(2+).

In terms of biological role, negatively regulates transcription of bacterial ribonucleotide reductase nrd genes and operons by binding to NrdR-boxes. The polypeptide is Transcriptional repressor NrdR (Pediococcus pentosaceus (strain ATCC 25745 / CCUG 21536 / LMG 10740 / 183-1w)).